The chain runs to 197 residues: Protein tyrosine phosphatase receptor type C-associated protein (197 aa).

A helical membrane pass occupies residues 33-53 (VVTIVLLLLLLLLLVTALALA). Phosphoserine is present on residues Ser99 and Ser103. Disordered regions lie at residues 120 to 164 (GPEE…GSSA) and 177 to 197 (SAAW…VTAL). The segment covering 124-145 (AAAKEEEQRCQAEQTRDPRDTD) has biased composition (basic and acidic residues).

As to quaternary structure, interacts with CD45/PTPRC. In terms of processing, phosphorylated on tyrosine residues. In terms of tissue distribution, leukocyte-specific. Expressed in B- and T-cell lines, in spleen, thymus, and bone marrow of adult mice, and in embryos.

The protein localises to the membrane. The polypeptide is Protein tyrosine phosphatase receptor type C-associated protein (Ptprcap) (Mus musculus (Mouse)).